The primary structure comprises 434 residues: Beta-enolase (434 aa).

An N-acetylalanine modification is found at Ala-2. Residue Thr-72 is modified to Phosphothreonine. Residues Ser-83 and Ser-157 each carry the phosphoserine modification. 2 residues coordinate substrate: His-158 and Glu-167. Ser-176 bears the Phosphoserine mark. Thr-205 carries the post-translational modification Phosphothreonine. Glu-210 functions as the Proton donor in the catalytic mechanism. Thr-229 carries the phosphothreonine modification. Tyr-236 carries the phosphotyrosine modification. Residue Asp-245 coordinates Mg(2+). Ser-263 bears the Phosphoserine mark. Glu-293 and Asp-318 together coordinate substrate. 2 residues coordinate Mg(2+): Glu-293 and Asp-318. The Proton acceptor role is filled by Lys-343. Residues 370 to 373 (SHRS) and Lys-394 contribute to the substrate site.

It belongs to the enolase family. In terms of assembly, mammalian enolase is composed of 3 isozyme subunits, alpha, beta and gamma, which can form homodimers or heterodimers which are cell-type and development-specific. Interacts with PNKD. Mg(2+) is required as a cofactor. The alpha/alpha homodimer is expressed in embryo and in most adult tissues. The alpha/beta heterodimer and the beta/beta homodimer are found in striated muscle, and the alpha/gamma heterodimer and the gamma/gamma homodimer in neurons.

It is found in the cytoplasm. It catalyses the reaction (2R)-2-phosphoglycerate = phosphoenolpyruvate + H2O. It participates in carbohydrate degradation; glycolysis; pyruvate from D-glyceraldehyde 3-phosphate: step 4/5. Functionally, glycolytic enzyme that catalyzes the conversion of 2-phosphoglycerate to phosphoenolpyruvate. Appears to have a function in striated muscle development and regeneration. This chain is Beta-enolase (Eno3), found in Rattus norvegicus (Rat).